Consider the following 634-residue polypeptide: Chaperone protein HtpG (634 aa).

The a; substrate-binding stretch occupies residues Met-1 to Arg-342. The tract at residues Glu-343 to Gln-559 is b. Residues Leu-560 to Ala-634 are c.

This sequence belongs to the heat shock protein 90 family. In terms of assembly, homodimer.

The protein resides in the cytoplasm. Its function is as follows. Molecular chaperone. Has ATPase activity. In Xanthomonas campestris pv. campestris (strain 8004), this protein is Chaperone protein HtpG.